The chain runs to 282 residues: Pantothenate synthetase (282 aa).

Position 26–33 (26–33 (MGNLHEGH)) interacts with ATP. The active-site Proton donor is H33. Q57 contacts (R)-pantoate. Q57 lines the beta-alanine pocket. 144–147 (GKKD) contacts ATP. Q150 is a binding site for (R)-pantoate. ATP-binding positions include I173 and 181-184 (LSSR).

This sequence belongs to the pantothenate synthetase family. As to quaternary structure, homodimer.

The protein localises to the cytoplasm. It carries out the reaction (R)-pantoate + beta-alanine + ATP = (R)-pantothenate + AMP + diphosphate + H(+). It functions in the pathway cofactor biosynthesis; (R)-pantothenate biosynthesis; (R)-pantothenate from (R)-pantoate and beta-alanine: step 1/1. Functionally, catalyzes the condensation of pantoate with beta-alanine in an ATP-dependent reaction via a pantoyl-adenylate intermediate. In Cupriavidus necator (strain ATCC 17699 / DSM 428 / KCTC 22496 / NCIMB 10442 / H16 / Stanier 337) (Ralstonia eutropha), this protein is Pantothenate synthetase.